Consider the following 363-residue polypeptide: Chorismate synthase (363 aa).

Residues 44 to 63 (DLDRRKPGTSRHTTQRQEPD) form a disordered region. The NADP(+) site is built by R48 and R54. FMN contacts are provided by residues 125–127 (RSS), 237–238 (NA), G277, 292–296 (KPTSS), and R318.

The protein belongs to the chorismate synthase family. In terms of assembly, homotetramer. The cofactor is FMNH2.

It catalyses the reaction 5-O-(1-carboxyvinyl)-3-phosphoshikimate = chorismate + phosphate. Its pathway is metabolic intermediate biosynthesis; chorismate biosynthesis; chorismate from D-erythrose 4-phosphate and phosphoenolpyruvate: step 7/7. Catalyzes the anti-1,4-elimination of the C-3 phosphate and the C-6 proR hydrogen from 5-enolpyruvylshikimate-3-phosphate (EPSP) to yield chorismate, which is the branch point compound that serves as the starting substrate for the three terminal pathways of aromatic amino acid biosynthesis. This reaction introduces a second double bond into the aromatic ring system. This is Chorismate synthase from Pseudomonas fluorescens (strain ATCC BAA-477 / NRRL B-23932 / Pf-5).